Consider the following 72-residue polypeptide: DNA gyrase inhibitor YacG (72 aa).

Zn(2+)-binding residues include cysteine 17, cysteine 20, cysteine 32, and cysteine 36. Residues 52 to 72 (PGPEEDEMSYPPHSNDGNRSR) are disordered.

Belongs to the DNA gyrase inhibitor YacG family. Interacts with GyrB. Zn(2+) serves as cofactor.

Functionally, inhibits all the catalytic activities of DNA gyrase by preventing its interaction with DNA. Acts by binding directly to the C-terminal domain of GyrB, which probably disrupts DNA binding by the gyrase. The chain is DNA gyrase inhibitor YacG from Methylorubrum extorquens (strain CM4 / NCIMB 13688) (Methylobacterium extorquens).